An 886-amino-acid chain; its full sequence is Protein suppressor of hairy wing (886 aa).

Disordered stretches follow at residues 24 to 62 (SVSPSKDKRPTRMKLLNNLSASSPQTYPPKTDKRSGIKG) and 167 to 211 (DEVV…KNSG). The segment covering 184-201 (VTEEEEEEEEDDLDEEGD) has biased composition (acidic residues). The C2H2-type 1; atypical zinc-finger motif lies at 221–243 (HVCGKCYKTFRRLMSLKKHLEFC). The segment at 291–314 (INCPDCPKSFKTQTSYERHIFITH) adopts a C2H2-type 2 zinc-finger fold. The C2H2-type 3; atypical zinc-finger motif lies at 320 to 342 (YPCSICNANLRSEALLKLHEEQH). C2H2-type zinc fingers lie at residues 349-367 (YACKICGKDFTRSYHLKRH), 381-403 (MSCKVCDRVFYRLDNLRSHLKHH), 414-436 (YMCHVCKNCFYSLSTLNIHIRTH), 442-464 (FDCDLCDKKLSALVALKKHRRYH), 470-492 (YSCTVCNQAFAVKEVLNRHMKRH), 498-520 (HKCEECGKSFIQATQLRTHSKTH), 524-546 (FACDMCEEKFKTEKQLERHVKEH), 554-578 (FSCTECKRHFRNTAQLKQHMDAGDH), and 600-623 (TDCAICDKNFDSSETLRKHIRSVH). Over residues 571 to 587 (QHMDAGDHSEKSGEKPQ) the composition is skewed to basic and acidic residues. The disordered stretch occupies residues 571 to 594 (QHMDAGDHSEKSGEKPQRAKRSST).

It localises to the nucleus. In terms of biological role, component of the gypsy chromatin insulator complex which is required for the function of the gypsy chromatin insulator and other endogenous chromatin insulators. Chromatin insulators are regulatory elements which establish independent domains of transcriptional activity within eukaryotic genomes. Insulators have two defining properties; they can block the communication between an enhancer and a promoter when placed between them and can also buffer transgenes from position effect variegation (PEV). Insulators are proposed to structure the chromatin fiber into independent domains of differing transcriptional potential by promoting the formation of distinct chromatin loops. This chromatin looping may involve the formation of insulator bodies, where homotypic interactions between individual subunits of the insulator complex could promote the clustering of widely spaced insulators at the nuclear periphery. Within the gypsy insulator complex, this protein binds specifically to a region of the gypsy element located 3' of the 5' long terminal repeat (LTR), and may also mediate interaction with other endogenous insulators at sites distinct from those recognized by Cp190. Cooperates with pita and cliff to recruit Cp190 and regulate insulator function at the front-ultraabdominal (Fub) boundary. This chain is Protein suppressor of hairy wing (su(Hw)), found in Drosophila ananassae (Fruit fly).